The primary structure comprises 409 residues: Dipeptidase 1 (409 aa).

An N-terminal signal peptide occupies residues 1–16; the sequence is MWTSWWLWPLVAVCAA. Residues His-36 and Asp-38 each coordinate Zn(2+). An N-linked (GlcNAc...) asparagine glycan is attached at Asn-57. Residues Cys-87 and Cys-170 are joined by a disulfide bond. Glu-141 provides a ligand contact to Zn(2+). Substrate is bound at residue His-168. His-214 and His-235 together coordinate Zn(2+). Cys-242 and Cys-274 form a disulfide bridge. Residue Arg-246 coordinates substrate. A glycan (N-linked (GlcNAc...) asparagine) is linked at Asn-279. Asp-304 is a substrate binding site. The GPI-anchor amidated serine moiety is linked to residue Ser-384. The propeptide at 385 to 409 is removed in mature form; the sequence is AAPSLHLPPGSLLASLVPLLLLSLP.

Belongs to the metallo-dependent hydrolases superfamily. Peptidase M19 family. Homodimer; disulfide-linked. The cofactor is Zn(2+).

It is found in the apical cell membrane. Its subcellular location is the cell projection. It localises to the microvillus membrane. The protein resides in the cell membrane. The catalysed reaction is an L-aminoacyl-L-amino acid + H2O = 2 an L-alpha-amino acid. It carries out the reaction leukotriene D4 + H2O = leukotriene E4 + glycine. It catalyses the reaction L-cystine-bis-glycine + 2 H2O = L-cystine + 2 glycine. The enzyme catalyses a beta-lactam + H2O = a substituted beta-amino acid. The catalysed reaction is glycyldehydrophenylalanine + H2O = 2,3-didehydrophenylalanine + glycine. With respect to regulation, inhibited by L-penicillamine. Inhibited by cilastatin. In terms of biological role, hydrolyzes a wide range of dipeptides. Hydrolyzes the conversion of leukotriene D4 to leukotriene E4. Hydrolyzes cystinyl-bis-glycine (cys-bis-gly) formed during glutathione degradation. Also possesses beta lactamase activity and hydrolytically inactivates beta-lactam antibiotics. Its function is as follows. Independently of its dipeptidase activity, acts as an adhesion receptor for neutrophil recruitment from bloodstream into inflamed lungs and liver. The protein is Dipeptidase 1 (DPEP1) of Sus scrofa (Pig).